Consider the following 460-residue polypeptide: Monocarboxylate transporter 12 (460 aa).

The Cytoplasmic portion of the chain corresponds to 1 to 10; that stretch reads MTQEKRSLHK. 12 consecutive transmembrane segments (helical) span residues 11-31, 58-78, 86-106, 115-135, 148-168, 177-197, 246-266, 282-302, 329-349, 354-374, 376-396, and 406-426; these read TPPD…VTVC, AWIH…GSYV, VGII…SFAT, LGVL…AMVG, IAMS…QLLI, LLIL…MRPI, FIIL…PFVY, AFLM…FGWV, FLPI…FGYF, VALI…SSAL, VVFF…GWLV, and FLLS…AKII. The Cytoplasmic portion of the chain corresponds to 427-460; sequence NRIKKNPQATVVRSSDIKQEVWTNGDVSCLNAIS.

It belongs to the major facilitator superfamily. Monocarboxylate porter (TC 2.A.1.13) family.

It is found in the cell membrane. Its subcellular location is the basolateral cell membrane. It catalyses the reaction creatine(in) = creatine(out). The enzyme catalyses guanidinoacetate(in) = guanidinoacetate(out). Functionally, functions as a transporter for creatine and as well for its precursor guanidinoacetate. Transport of creatine and GAA is independent of resting membrane potential and extracellular Na(+), Cl(-), or pH. Contributes to the process of creatine biosynthesis and distribution. The chain is Monocarboxylate transporter 12 (slc16a12) from Xenopus laevis (African clawed frog).